The primary structure comprises 305 residues: GTP cyclohydrolase FolE2 (305 aa).

It belongs to the GTP cyclohydrolase IV family.

It carries out the reaction GTP + H2O = 7,8-dihydroneopterin 3'-triphosphate + formate + H(+). The protein operates within cofactor biosynthesis; 7,8-dihydroneopterin triphosphate biosynthesis; 7,8-dihydroneopterin triphosphate from GTP: step 1/1. Converts GTP to 7,8-dihydroneopterin triphosphate. The polypeptide is GTP cyclohydrolase FolE2 (Xanthomonas euvesicatoria pv. vesicatoria (strain 85-10) (Xanthomonas campestris pv. vesicatoria)).